The chain runs to 321 residues: Glucokinase (321 aa).

8–13 (GDVGGT) contacts ATP.

It belongs to the bacterial glucokinase family.

The protein localises to the cytoplasm. The catalysed reaction is D-glucose + ATP = D-glucose 6-phosphate + ADP + H(+). In Salmonella heidelberg (strain SL476), this protein is Glucokinase.